The following is a 93-amino-acid chain: MAPGKAPAGHFSILYFAAASTFTGKTSEHLPAPVRARHVFTMLEERYPGIGDKVLSSCAVTVNLEYVDIGEEDAEQQIEEGDEVAIIPPVSSG.

1-thioglycine; alternate is present on G93. G93 carries the post-translational modification Glycyl adenylate; alternate.

Belongs to the MoaD family. MOCS2A subfamily. As to quaternary structure, heterotetramer; composed of 2 small (MOCS2A) and 2 large (MOCS2B) subunits. In terms of processing, C-terminal thiocarboxylation occurs in 2 steps, it is first acyl-adenylated (-COAMP) via the hesA/moeB/thiF part of uba4, then thiocarboxylated (-COSH) via the rhodanese domain of uba4.

The protein resides in the cytoplasm. It functions in the pathway cofactor biosynthesis; molybdopterin biosynthesis. Acts as a sulfur carrier required for molybdopterin biosynthesis. Component of the molybdopterin synthase complex that catalyzes the conversion of precursor Z into molybdopterin by mediating the incorporation of 2 sulfur atoms into precursor Z to generate a dithiolene group. In the complex, serves as sulfur donor by being thiocarboxylated (-COSH) at its C-terminus by uba4. After interaction with MOCS2B, the sulfur is then transferred to precursor Z to form molybdopterin. This is Molybdopterin synthase sulfur carrier subunit from Pyrenophora tritici-repentis (strain Pt-1C-BFP) (Wheat tan spot fungus).